The chain runs to 266 residues: DNA repair protein RecO (266 aa).

It belongs to the RecO family.

Involved in DNA repair and RecF pathway recombination. This is DNA repair protein RecO from Synechococcus elongatus (strain ATCC 33912 / PCC 7942 / FACHB-805) (Anacystis nidulans R2).